A 446-amino-acid chain; its full sequence is Vacuolar cation/proton exchanger 4 (446 aa).

Positions 1–16 are enriched in low complexity; sequence MSSISTESSSNLSLLE. The interval 1–33 is disordered; it reads MSSISTESSSNLSLLENGGGGSDKPTAETSRRV. Residues 1–69 lie on the Cytoplasmic side of the membrane; sequence MSSISTESSS…MRRILTNLQE (69 aa). The chain crosses the membrane as a helical span at residues 70 to 90; that stretch reads VLLGTKLFILFPAVPLAVVAH. Residues 91-96 are Extracellular-facing; sequence RYDCPR. Residues 97–117 form a helical membrane-spanning segment; the sequence is AWVFALSLLGLTPLAERISFL. At 118–128 the chain is on the cytoplasmic side; it reads TEQIAFHTGPT. Residues 129-149 traverse the membrane as a helical segment; that stretch reads VGGLMNATCGNATEMIIAILA. The tract at residues 138–173 is cation selection; that stretch reads GNATEMIIAILAVGQRKMRIVKLSLLGSILSNLLFV. Residues 150-162 lie on the Extracellular side of the membrane; sequence VGQRKMRIVKLSL. A helical membrane pass occupies residues 163–183; the sequence is LGSILSNLLFVLGTSLFLGGI. Residues 184 to 196 are Cytoplasmic-facing; it reads SNLRKHQSFDPRQ. The helical transmembrane segment at 197–217 threads the bilayer; it reads GDMNSMLLYLALLCQTLPMIM. At 218 to 238 the chain is on the extracellular side; the sequence is RFTMEAEEYDGSDVVVLSRAS. The chain crosses the membrane as a helical span at residues 239–259; sequence SFVMLIAYLAFLIFHLFSSHL. The Cytoplasmic segment spans residues 260–285; the sequence is SPPPPPLPQREDVHDDDVSDKEEEGA. Residues 286–306 traverse the membrane as a helical segment; sequence VIGMWSAIFWLIIMTLLVALL. Residues 307-319 lie on the Extracellular side of the membrane; it reads SDYLVSTIQDAAD. The helical transmembrane segment at 320-340 threads the bilayer; it reads SWGLSVGFIGIILLPIVGNAA. The cation selection stretch occupies residues 337–372; that stretch reads GNAAEHAGAVIFAFRNKLDITLGIALGSATQIALFV. The Cytoplasmic portion of the chain corresponds to 341–359; the sequence is EHAGAVIFAFRNKLDITLG. The chain crosses the membrane as a helical span at residues 360 to 380; that stretch reads IALGSATQIALFVVPVTVLVA. Residues 381-388 are Extracellular-facing; the sequence is WTMGIEMD. Residues 389-409 form a helical membrane-spanning segment; the sequence is LNFNLLETACFALSILVTSLV. Topologically, residues 410 to 416 are cytoplasmic; it reads LQDGTSN. Residues 417 to 437 form a helical membrane-spanning segment; the sequence is YMKGLVLLLCYVVIAACFFVS. Residues 438 to 446 are Extracellular-facing; sequence NSPSSKLLF.

It belongs to the Ca(2+):cation antiporter (CaCA) (TC 2.A.19) family. Cation/proton exchanger (CAX) subfamily. In terms of tissue distribution, expressed at low levels in all tissues.

The protein resides in the vacuole membrane. Its function is as follows. Vacuolar cation/proton exchanger (CAX). Translocates Ca(2+) and other metal ions into vacuoles using the proton gradient formed by H(+)-ATPase and H(+)-pyrophosphatase. Cation selectivity transport in tobacco root tonoplast vesicles is Cd(2+)&gt;Zn(2+)&gt;&gt;Ca(2+)&gt;&gt;&gt;Mn(2+). In Arabidopsis thaliana (Mouse-ear cress), this protein is Vacuolar cation/proton exchanger 4 (CAX4).